The following is a 155-amino-acid chain: SsrA-binding protein (155 aa).

This sequence belongs to the SmpB family.

The protein resides in the cytoplasm. In terms of biological role, required for rescue of stalled ribosomes mediated by trans-translation. Binds to transfer-messenger RNA (tmRNA), required for stable association of tmRNA with ribosomes. tmRNA and SmpB together mimic tRNA shape, replacing the anticodon stem-loop with SmpB. tmRNA is encoded by the ssrA gene; the 2 termini fold to resemble tRNA(Ala) and it encodes a 'tag peptide', a short internal open reading frame. During trans-translation Ala-aminoacylated tmRNA acts like a tRNA, entering the A-site of stalled ribosomes, displacing the stalled mRNA. The ribosome then switches to translate the ORF on the tmRNA; the nascent peptide is terminated with the 'tag peptide' encoded by the tmRNA and targeted for degradation. The ribosome is freed to recommence translation, which seems to be the essential function of trans-translation. The protein is SsrA-binding protein of Streptococcus uberis (strain ATCC BAA-854 / 0140J).